Here is a 178-residue protein sequence, read N- to C-terminus: Large ribosomal subunit protein uL6 (178 aa).

This sequence belongs to the universal ribosomal protein uL6 family. Part of the 50S ribosomal subunit.

Functionally, this protein binds to the 23S rRNA, and is important in its secondary structure. It is located near the subunit interface in the base of the L7/L12 stalk, and near the tRNA binding site of the peptidyltransferase center. The protein is Large ribosomal subunit protein uL6 of Halobacterium salinarum (strain ATCC 700922 / JCM 11081 / NRC-1) (Halobacterium halobium).